We begin with the raw amino-acid sequence, 189 residues long: NADH-quinone oxidoreductase subunit B (189 aa).

[4Fe-4S] cluster-binding residues include C39, C40, C104, and C135.

It belongs to the complex I 20 kDa subunit family. In terms of assembly, NDH-1 is composed of 14 different subunits. Subunits NuoB, C, D, E, F, and G constitute the peripheral sector of the complex. [4Fe-4S] cluster serves as cofactor.

The protein resides in the cell inner membrane. The enzyme catalyses a quinone + NADH + 5 H(+)(in) = a quinol + NAD(+) + 4 H(+)(out). Functionally, NDH-1 shuttles electrons from NADH, via FMN and iron-sulfur (Fe-S) centers, to quinones in the respiratory chain. The immediate electron acceptor for the enzyme in this species is believed to be a menaquinone. Couples the redox reaction to proton translocation (for every two electrons transferred, four hydrogen ions are translocated across the cytoplasmic membrane), and thus conserves the redox energy in a proton gradient. The polypeptide is NADH-quinone oxidoreductase subunit B (Chlorobaculum tepidum (strain ATCC 49652 / DSM 12025 / NBRC 103806 / TLS) (Chlorobium tepidum)).